The sequence spans 316 residues: MFVLNKFFTNSHYKKIVPVVLLSCATLIGCSNSNTQSESNKQTNQTNQVKQENKRNHAFAKLEKEYNAKLGIYALDTSTNQTVAYHADDRFAFASTSKSLAVGALLRQNSIEALDERITYTRKDLSNYNPITEKHVDTGMTLKELADASVRYSDSTAHNLILKKLGGPSAFEKILREMGDTVTNSERFEPELNEVNPGETHDTSTPKAIAKTLQSFTLGTVLPSEKRELLVDWMKRNTTGDKLIRAGVPKGWEVADKTGAGSYGTRNDIAIIWPPNKKPIVLSILSNHDKEDAEYDDTLIADATKIVLETLKVTNK.

A signal peptide spans 1 to 29; that stretch reads MFVLNKFFTNSHYKKIVPVVLLSCATLIG. A lipid anchor (N-palmitoyl cysteine) is attached at Cys30. Cys30 carries S-diacylglycerol cysteine lipidation. The interval 34–53 is disordered; that stretch reads NTQSESNKQTNQTNQVKQEN. The span at 40–50 shows a compositional bias: low complexity; the sequence is NKQTNQTNQVK. Ser95 acts as the Acyl-ester intermediate in catalysis. Catalysis depends on Glu191, which acts as the Proton acceptor. A substrate-binding site is contributed by 257–259; that stretch reads KTG.

This sequence belongs to the class-A beta-lactamase family.

The protein resides in the cell membrane. The enzyme catalyses a beta-lactam + H2O = a substituted beta-amino acid. This Bacillus cereus protein is Beta-lactamase 3 (blaZ).